A 1357-amino-acid polypeptide reads, in one-letter code: DNA-directed RNA polymerase subunit beta (1357 aa).

This sequence belongs to the RNA polymerase beta chain family. The RNAP catalytic core consists of 2 alpha, 1 beta, 1 beta' and 1 omega subunit. When a sigma factor is associated with the core the holoenzyme is formed, which can initiate transcription.

It catalyses the reaction RNA(n) + a ribonucleoside 5'-triphosphate = RNA(n+1) + diphosphate. Functionally, DNA-dependent RNA polymerase catalyzes the transcription of DNA into RNA using the four ribonucleoside triphosphates as substrates. The sequence is that of DNA-directed RNA polymerase subunit beta from Pseudomonas aeruginosa (strain ATCC 15692 / DSM 22644 / CIP 104116 / JCM 14847 / LMG 12228 / 1C / PRS 101 / PAO1).